The following is a 312-amino-acid chain: DNA-directed RNA polymerase subunit alpha (312 aa).

The segment at 1 to 226 is alpha N-terminal domain (alpha-NTD); that stretch reads MIEFEKPTIT…EHLGLFTDLT (226 aa). An alpha C-terminal domain (alpha-CTD) region spans residues 242-312; it reads SDDRMLDRTI…DLGLGLKKDK (71 aa).

The protein belongs to the RNA polymerase alpha chain family. Homodimer. The RNAP catalytic core consists of 2 alpha, 1 beta, 1 beta' and 1 omega subunit. When a sigma factor is associated with the core the holoenzyme is formed, which can initiate transcription.

The catalysed reaction is RNA(n) + a ribonucleoside 5'-triphosphate = RNA(n+1) + diphosphate. In terms of biological role, DNA-dependent RNA polymerase catalyzes the transcription of DNA into RNA using the four ribonucleoside triphosphates as substrates. The chain is DNA-directed RNA polymerase subunit alpha from Streptococcus suis (strain 98HAH33).